Consider the following 36-residue polypeptide: Photosystem I reaction center subunit VIII (36 aa).

The helical transmembrane segment at 6–26 (LPSIFVPLVGLVFPAIAMASL) threads the bilayer.

Belongs to the PsaI family.

The protein localises to the plastid. It is found in the chloroplast thylakoid membrane. Functionally, may help in the organization of the PsaL subunit. The chain is Photosystem I reaction center subunit VIII from Liriodendron tulipifera (Tuliptree).